Reading from the N-terminus, the 250-residue chain is Small ribosomal subunit protein uS2 (250 aa).

The protein belongs to the universal ribosomal protein uS2 family.

This is Small ribosomal subunit protein uS2 from Polaromonas sp. (strain JS666 / ATCC BAA-500).